The chain runs to 162 residues: Ribosome maturation factor RimM (162 aa).

Residues 86–160 (EGRYYYFALI…GIHVDPIPGL (75 aa)) enclose the PRC barrel domain.

The protein belongs to the RimM family. In terms of assembly, binds ribosomal protein uS19.

Its subcellular location is the cytoplasm. In terms of biological role, an accessory protein needed during the final step in the assembly of 30S ribosomal subunit, possibly for assembly of the head region. Essential for efficient processing of 16S rRNA. May be needed both before and after RbfA during the maturation of 16S rRNA. It has affinity for free ribosomal 30S subunits but not for 70S ribosomes. This chain is Ribosome maturation factor RimM, found in Thermus thermophilus (strain ATCC BAA-163 / DSM 7039 / HB27).